We begin with the raw amino-acid sequence, 108 residues long: UPF0145 protein Acel_2109 (108 aa).

Belongs to the UPF0145 family.

This chain is UPF0145 protein Acel_2109, found in Acidothermus cellulolyticus (strain ATCC 43068 / DSM 8971 / 11B).